We begin with the raw amino-acid sequence, 289 residues long: Putative 2-aminoethylphosphonate transport system permease protein PhnU (289 aa).

Transmembrane regions (helical) follow at residues 19–39 (WLLL…SLIV), 76–96 (FFAT…LVFI), 111–131 (FIAL…GSAG), 150–170 (FLYS…PLVM), 202–222 (VIFP…LLLT), and 254–274 (YTVA…LFSL). The region spanning 68–275 (LLNTLQIAFF…VLSLGLFSLY (208 aa)) is the ABC transmembrane type-1 domain.

Belongs to the binding-protein-dependent transport system permease family.

It localises to the cell inner membrane. Its function is as follows. Probably part of the PhnSTUV complex (TC 3.A.1.11.5) involved in 2-aminoethylphosphonate import. Probably responsible for the translocation of the substrate across the membrane. This is Putative 2-aminoethylphosphonate transport system permease protein PhnU (phnU) from Salmonella typhi.